Here is a 334-residue protein sequence, read N- to C-terminus: Anthranilate phosphoribosyltransferase (334 aa).

Residues Gly79, 82-83 (GD), Ser87, 89-92 (NIST), 107-115 (KHGNRSISS), and Ser119 each bind 5-phospho-alpha-D-ribose 1-diphosphate. Gly79 contributes to the anthranilate binding site. Position 91 (Ser91) interacts with Mg(2+). Anthranilate is bound at residue Asn110. An anthranilate-binding site is contributed by Arg165. Mg(2+) contacts are provided by Asp224 and Glu225.

Belongs to the anthranilate phosphoribosyltransferase family. In terms of assembly, homodimer. It depends on Mg(2+) as a cofactor.

It catalyses the reaction N-(5-phospho-beta-D-ribosyl)anthranilate + diphosphate = 5-phospho-alpha-D-ribose 1-diphosphate + anthranilate. The protein operates within amino-acid biosynthesis; L-tryptophan biosynthesis; L-tryptophan from chorismate: step 2/5. Catalyzes the transfer of the phosphoribosyl group of 5-phosphorylribose-1-pyrophosphate (PRPP) to anthranilate to yield N-(5'-phosphoribosyl)-anthranilate (PRA). The protein is Anthranilate phosphoribosyltransferase of Streptococcus pneumoniae (strain 70585).